A 145-amino-acid polypeptide reads, in one-letter code: D-aminoacyl-tRNA deacylase (145 aa).

The short motif at 137-138 (GP) is the Gly-cisPro motif, important for rejection of L-amino acids element.

Belongs to the DTD family. In terms of assembly, homodimer.

The protein localises to the cytoplasm. It catalyses the reaction glycyl-tRNA(Ala) + H2O = tRNA(Ala) + glycine + H(+). The catalysed reaction is a D-aminoacyl-tRNA + H2O = a tRNA + a D-alpha-amino acid + H(+). An aminoacyl-tRNA editing enzyme that deacylates mischarged D-aminoacyl-tRNAs. Also deacylates mischarged glycyl-tRNA(Ala), protecting cells against glycine mischarging by AlaRS. Acts via tRNA-based rather than protein-based catalysis; rejects L-amino acids rather than detecting D-amino acids in the active site. By recycling D-aminoacyl-tRNA to D-amino acids and free tRNA molecules, this enzyme counteracts the toxicity associated with the formation of D-aminoacyl-tRNA entities in vivo and helps enforce protein L-homochirality. The chain is D-aminoacyl-tRNA deacylase from Shewanella oneidensis (strain ATCC 700550 / JCM 31522 / CIP 106686 / LMG 19005 / NCIMB 14063 / MR-1).